A 493-amino-acid chain; its full sequence is Transcript termination protein A18 (493 aa).

Residues 100–256 enclose the Helicase ATP-binding domain; sequence MIELKRPLYI…NSIINIAKLS (157 aa). Position 113-120 (113-120) interacts with ATP; the sequence is LACGFGKT. Positions 206–209 match the DESH box motif; that stretch reads DESH.

It belongs to the helicase family. Poxviruses subfamily. Interacts with G2. Might be part of a transcription complex composed at least of G2, A18, and H5.

It localises to the virion. DNA helicase which seems to act as a postreplicative transcription termination factor. Involved in ATP-dependent release of nascent RNA. Forms a stable complex with single-stranded DNA, and to a lesser extent RNA. This is Transcript termination protein A18 from Camelus.